Here is a 249-residue protein sequence, read N- to C-terminus: DNA repair protein RecO (249 aa).

This sequence belongs to the RecO family.

In terms of biological role, involved in DNA repair and RecF pathway recombination. This is DNA repair protein RecO from Leptospira biflexa serovar Patoc (strain Patoc 1 / Ames).